Here is a 127-residue protein sequence, read N- to C-terminus: UPF0325 protein VV1_1856 (127 aa).

This sequence belongs to the UPF0325 family.

This chain is UPF0325 protein VV1_1856, found in Vibrio vulnificus (strain CMCP6).